The following is a 368-amino-acid chain: GDSL esterase/lipase At4g16230 (368 aa).

Residues 1–24 (MSLLVFLCQIIVLSVLFFSEVCLA) form the signal peptide. Catalysis depends on Ser37, which acts as the Nucleophile. 2 N-linked (GlcNAc...) asparagine glycosylation sites follow: Asn117 and Asn286. Residues Asp329 and His332 contribute to the active site.

Belongs to the 'GDSL' lipolytic enzyme family.

The protein resides in the secreted. The polypeptide is GDSL esterase/lipase At4g16230 (Arabidopsis thaliana (Mouse-ear cress)).